The chain runs to 120 residues: Peptidyl-tRNA hydrolase (120 aa).

The protein belongs to the PTH2 family.

The protein localises to the cytoplasm. The enzyme catalyses an N-acyl-L-alpha-aminoacyl-tRNA + H2O = an N-acyl-L-amino acid + a tRNA + H(+). The natural substrate for this enzyme may be peptidyl-tRNAs which drop off the ribosome during protein synthesis. The chain is Peptidyl-tRNA hydrolase from Pyrobaculum aerophilum (strain ATCC 51768 / DSM 7523 / JCM 9630 / CIP 104966 / NBRC 100827 / IM2).